The sequence spans 108 residues: Cell division topological specificity factor (108 aa).

This sequence belongs to the MinE family.

Functionally, prevents the cell division inhibition by proteins MinC and MinD at internal division sites while permitting inhibition at polar sites. This ensures cell division at the proper site by restricting the formation of a division septum at the midpoint of the long axis of the cell. The protein is Cell division topological specificity factor of Prochlorococcus marinus (strain AS9601).